Consider the following 559-residue polypeptide: Cocaine esterase (559 aa).

The N-terminal stretch at 1-26 is a signal peptide; it reads MRLHRLRARLSAVACGLLLLLVRGQG. Gln-27 carries the pyrrolidone carboxylic acid modification. Cys-95 and Cys-123 are disulfide-bonded. N-linked (GlcNAc...) asparagine glycosylation occurs at Asn-111. Catalysis depends on Ser-228, which acts as the Acyl-ester intermediate. Residue Asn-276 is glycosylated (N-linked (GlcNAc...) asparagine). The cysteines at positions 280 and 291 are disulfide-linked. Active-site charge relay system residues include Glu-345 and His-457. The Prevents secretion from ER signature appears at 556–559; the sequence is HTEL.

Belongs to the type-B carboxylesterase/lipase family. Monomer. Glycosylated. As to expression, preferentially expressed in intestine with moderate expression in liver. Within the intestine, highest expression is found in small intestine with lower expression in colon and rectum.

It localises to the endoplasmic reticulum lumen. It carries out the reaction cocaine + H2O = ecgonine methyl ester + benzoate + H(+). The catalysed reaction is a carboxylic ester + H2O = an alcohol + a carboxylate + H(+). The enzyme catalyses 4-methylumbelliferyl acetate + H2O = 4-methylumbelliferone + acetate + H(+). It catalyses the reaction 2-(5Z,8Z,11Z,14Z-eicosatetraenoyl)-glycerol + H2O = glycerol + (5Z,8Z,11Z,14Z)-eicosatetraenoate + H(+). It carries out the reaction prostaglandin E2 1-glyceryl ester + H2O = prostaglandin E2 + glycerol + H(+). The catalysed reaction is prostaglandin F2alpha 1-glyceryl ester + H2O = prostaglandin F2alpha + glycerol + H(+). Involved in the detoxification of xenobiotics and in the activation of ester and amide prodrugs. Shows high catalytic efficiency for hydrolysis of cocaine, 4-methylumbelliferyl acetate, heroin and 6-monoacetylmorphine. Hydrolyzes aspirin, substrates with large alcohol group and small acyl group and endogenous lipids such as triacylglycerol. Converts monoacylglycerides to free fatty acids and glycerol. Hydrolyzes of 2-arachidonoylglycerol and prostaglandins. This is Cocaine esterase from Homo sapiens (Human).